The sequence spans 136 residues: Cytidine deaminase (136 aa).

The region spanning 1–128 (MNRQELITEA…ELLPGAFSSE (128 aa)) is the CMP/dCMP-type deaminase domain. 42-44 (NIE) is a substrate binding site. Cysteine 53 serves as a coordination point for Zn(2+). Glutamate 55 functions as the Proton donor in the catalytic mechanism. Zn(2+) contacts are provided by cysteine 86 and cysteine 89.

This sequence belongs to the cytidine and deoxycytidylate deaminase family. In terms of assembly, homotetramer. Requires Zn(2+) as cofactor.

It carries out the reaction cytidine + H2O + H(+) = uridine + NH4(+). The catalysed reaction is 2'-deoxycytidine + H2O + H(+) = 2'-deoxyuridine + NH4(+). This enzyme scavenges exogenous and endogenous cytidine and 2'-deoxycytidine for UMP synthesis. In Bacillus subtilis (strain 168), this protein is Cytidine deaminase (cdd).